Reading from the N-terminus, the 122-residue chain is MIIVESNLDVADNSGARRVQCIKVLGGSKRRTASVGDVIVVSIKDAIPRGKVKKGDVHQAVVVRTAYPVRRADGSVIRFDRNAAVLINKQMEPIGTRIFGPVTRELRARKFMKIISLAPEVL.

Belongs to the universal ribosomal protein uL14 family. As to quaternary structure, part of the 50S ribosomal subunit. Forms a cluster with proteins L3 and L19. In the 70S ribosome, L14 and L19 interact and together make contacts with the 16S rRNA in bridges B5 and B8.

Its function is as follows. Binds to 23S rRNA. Forms part of two intersubunit bridges in the 70S ribosome. The protein is Large ribosomal subunit protein uL14 of Acidiphilium cryptum (strain JF-5).